The sequence spans 272 residues: ATP synthase subunit a (272 aa).

5 helical membrane passes run 41-61 (VLNI…LLIF), 101-121 (LIAP…LMDL), 143-165 (VPSA…ILYY), 221-241 (LIFI…LNVP), and 243-263 (AIFH…LTIV).

Belongs to the ATPase A chain family. F-type ATPases have 2 components, CF(1) - the catalytic core - and CF(0) - the membrane proton channel. CF(1) has five subunits: alpha(3), beta(3), gamma(1), delta(1), epsilon(1). CF(0) has three main subunits: a(1), b(2) and c(9-12). The alpha and beta chains form an alternating ring which encloses part of the gamma chain. CF(1) is attached to CF(0) by a central stalk formed by the gamma and epsilon chains, while a peripheral stalk is formed by the delta and b chains.

Its subcellular location is the cell inner membrane. In terms of biological role, key component of the proton channel; it plays a direct role in the translocation of protons across the membrane. This chain is ATP synthase subunit a, found in Sodalis glossinidius (strain morsitans).